The sequence spans 67 residues: Alpha-conotoxin-like Pu1.1 (67 aa).

Positions 1-21 (MGMRMMFTVFLLVVLATTVVS) are cleaved as a signal peptide. Positions 22–46 (FTSDRTSDGRNAAFNAFDLIALTAR) are excised as a propeptide. A Pyrrolidone carboxylic acid modification is found at glutamine 47. 2 disulfide bridges follow: cysteine 49-cysteine 55 and cysteine 50-cysteine 63. The tract at residues 51–53 (NVP) is lacks the Ser-Xaa-Pro motif that is crucial for potent interaction with nAChR. Residue cysteine 63 is modified to Cysteine amide.

It belongs to the conotoxin A superfamily. Expressed by the venom duct.

It localises to the secreted. Its function is as follows. Alpha-conotoxins act on postsynaptic membranes, they bind to the nicotinic acetylcholine receptors (nAChR) and thus inhibit them. Has possibly a distinct nAChR binding mode from other alpha-conotoxins, due to a different three residue motif (lacks the Ser-Xaa-Pro motif). The protein is Alpha-conotoxin-like Pu1.1 of Conus pulicarius (Flea-bitten cone).